Consider the following 358-residue polypeptide: DNA integrity scanning protein DisA (358 aa).

The region spanning 6–144 is the DAC domain; sequence RPTLREAVAR…RGERHVLTDS (139 aa). Residues Gly73, Leu91, and 104–108 each bind ATP; that span reads TRHRS.

The protein belongs to the DisA family. Homooctamer. Mg(2+) is required as a cofactor.

It catalyses the reaction 2 ATP = 3',3'-c-di-AMP + 2 diphosphate. Participates in a DNA-damage check-point. DisA forms globular foci that rapidly scan along the chromosomes searching for lesions. In terms of biological role, also has diadenylate cyclase activity, catalyzing the condensation of 2 ATP molecules into cyclic di-AMP (c-di-AMP). c-di-AMP likely acts as a signaling molecule that may couple DNA integrity with a cellular process. The chain is DNA integrity scanning protein DisA from Mycobacterium bovis (strain ATCC BAA-935 / AF2122/97).